Here is a 364-residue protein sequence, read N- to C-terminus: Apyrase (364 aa).

Positions 1-35 (MRSSYRVGNPIRFQPTNVVGLLLLSLVLSFMLVQS) are cleaved as a signal peptide.

This sequence belongs to the apyrase family. It depends on Ca(2+) as a cofactor. Salivary gland (at protein level).

It is found in the secreted. The catalysed reaction is a ribonucleoside 5'-triphosphate + 2 H2O = a ribonucleoside 5'-phosphate + 2 phosphate + 2 H(+). Facilitates hematophagy by inhibiting ADP-dependent platelet aggregation in the host. Cleaves adenosine triphosphate (ATP) and adenosine diphosphate (ADP) to adenosine monophosphate (AMP) and inorganic phosphate in calcium-dependent manner. This chain is Apyrase, found in Cimex lectularius (Bed bug).